A 312-amino-acid chain; its full sequence is Ribosomal RNA small subunit methyltransferase H (312 aa).

Residues 33–35 (GGY), D51, F78, D97, and Q104 each bind S-adenosyl-L-methionine.

It belongs to the methyltransferase superfamily. RsmH family.

The protein resides in the cytoplasm. The catalysed reaction is cytidine(1402) in 16S rRNA + S-adenosyl-L-methionine = N(4)-methylcytidine(1402) in 16S rRNA + S-adenosyl-L-homocysteine + H(+). Specifically methylates the N4 position of cytidine in position 1402 (C1402) of 16S rRNA. The chain is Ribosomal RNA small subunit methyltransferase H from Orientia tsutsugamushi (strain Boryong) (Rickettsia tsutsugamushi).